Here is a 294-residue protein sequence, read N- to C-terminus: MGLVKVIKNKAYFKRYQVKLKRRREGKTDYYARKRLTVQDKNKYNTPKYRLIVRLTNKDIVAQLAYSKIEGDVVVASAYAHELPRYGLKAGLTNYAAAYATGLLLARRHLKAIGLDSTYKGHEELTGEDYNVEEEGDRAPFKAVLDIGLARTTTGSKIFAVMKGVADGGINVPHSESRFFGFDQESKDYNAEAHRDRILGKHVADYMSLLKEEDEDRYKRQFSKFLSNGMNADNLVATYQKAHANIRADPSPSAKKAAKPSKRHTAKRLTYDERKQRVADKKALLLQLKEQQQE.

The disordered stretch occupies residues 247-275; the sequence is RADPSPSAKKAAKPSKRHTAKRLTYDERK. Positions 256–267 are enriched in basic residues; sequence KAAKPSKRHTAK.

Belongs to the universal ribosomal protein uL18 family. Component of the large ribosomal subunit (LSU).

Its subcellular location is the cytoplasm. It localises to the nucleus. Component of the ribosome, a large ribonucleoprotein complex responsible for the synthesis of proteins in the cell. The small ribosomal subunit (SSU) binds messenger RNAs (mRNAs) and translates the encoded message by selecting cognate aminoacyl-transfer RNA (tRNA) molecules. The large subunit (LSU) contains the ribosomal catalytic site termed the peptidyl transferase center (PTC), which catalyzes the formation of peptide bonds, thereby polymerizing the amino acids delivered by tRNAs into a polypeptide chain. The nascent polypeptides leave the ribosome through a tunnel in the LSU and interact with protein factors that function in enzymatic processing, targeting, and the membrane insertion of nascent chains at the exit of the ribosomal tunnel. The protein is Large ribosomal subunit protein uL18 (rpl-5) of Caenorhabditis briggsae.